The following is a 447-amino-acid chain: Exodeoxyribonuclease 7 large subunit (447 aa).

The protein belongs to the XseA family. Heterooligomer composed of large and small subunits.

It is found in the cytoplasm. It catalyses the reaction Exonucleolytic cleavage in either 5'- to 3'- or 3'- to 5'-direction to yield nucleoside 5'-phosphates.. Functionally, bidirectionally degrades single-stranded DNA into large acid-insoluble oligonucleotides, which are then degraded further into small acid-soluble oligonucleotides. The polypeptide is Exodeoxyribonuclease 7 large subunit (Thioalkalivibrio sulfidiphilus (strain HL-EbGR7)).